A 613-amino-acid polypeptide reads, in one-letter code: Probable LRR receptor-like serine/threonine-protein kinase At5g10290 (613 aa).

Positions 1 to 31 (MRMFSLQKMAMAFTLLFFACLCSFVSPDAQG) are cleaved as a signal peptide. The Extracellular portion of the chain corresponds to 32–225 (DALFALRISL…SGDSSKPKTG (194 aa)). Residues Asn-81 and Asn-116 are each glycosylated (N-linked (GlcNAc...) asparagine). LRR repeat units lie at residues 95–117 (NLKTLTLKGNGITGEIPEDFGNL), 119–141 (SLTSLDLEDNQLTGRIPSTIGNL), 143–166 (KLQFLTLSRNKLNGTIPESLTGLP), and 167–189 (NLLNLLLDSNSLSGQIPQSLFEI). The N-linked (GlcNAc...) asparagine glycan is linked to Asn-155. The N-linked (GlcNAc...) asparagine glycan is linked to Asn-193. A helical transmembrane segment spans residues 226-246 (IIAGVVAGVTVVLFGILLFLF). Over 247 to 613 (CKDRHKGYRR…QDAIELSGGR (367 aa)) the chain is Cytoplasmic. Position 287 is a phosphothreonine (Thr-287). A Protein kinase domain is found at 290 to 569 (FSEKNVLGQG…VVRMLEGEGL (280 aa)). Residue 296 to 304 (LGQGGFGKV) coordinates ATP. Thr-313 carries the post-translational modification Phosphothreonine. Residue Lys-318 participates in ATP binding. Ser-371 is subject to Phosphoserine. Thr-390 carries the post-translational modification Phosphothreonine. Asp-417 functions as the Proton acceptor in the catalytic mechanism. Residues Thr-450, Thr-451, and Thr-456 each carry the phosphothreonine modification. Tyr-464 is modified (phosphotyrosine). Phosphoserine is present on Ser-466. At Thr-467 the chain carries Phosphothreonine. Ser-471 carries the phosphoserine modification. Position 547 is a phosphothreonine (Thr-547).

The protein belongs to the protein kinase superfamily. Ser/Thr protein kinase family.

Its subcellular location is the cell membrane. The catalysed reaction is L-seryl-[protein] + ATP = O-phospho-L-seryl-[protein] + ADP + H(+). It carries out the reaction L-threonyl-[protein] + ATP = O-phospho-L-threonyl-[protein] + ADP + H(+). This is Probable LRR receptor-like serine/threonine-protein kinase At5g10290 from Arabidopsis thaliana (Mouse-ear cress).